Reading from the N-terminus, the 370-residue chain is DNA replication and repair protein RecF (370 aa).

33–40 provides a ligand contact to ATP; that stretch reads GPNAAGKT.

The protein belongs to the RecF family.

Its subcellular location is the cytoplasm. Functionally, the RecF protein is involved in DNA metabolism; it is required for DNA replication and normal SOS inducibility. RecF binds preferentially to single-stranded, linear DNA. It also seems to bind ATP. The protein is DNA replication and repair protein RecF of Moorella thermoacetica (strain ATCC 39073 / JCM 9320).